Consider the following 337-residue polypeptide: Ketol-acid reductoisomerase (NADP(+)) (337 aa).

The region spanning 3-183 (VEVFYDDDAD…GGTRAGVIKT (181 aa)) is the KARI N-terminal Rossmann domain. Residues 26 to 29 (YGSQ), serine 52, serine 54, and 84 to 87 (DTAQ) contribute to the NADP(+) site. Histidine 109 is an active-site residue. Glycine 135 contacts NADP(+). A KARI C-terminal knotted domain is found at 184-329 (TFTEETETDL…GRLRAMMSWV (146 aa)). Mg(2+) contacts are provided by aspartate 192, glutamate 196, glutamate 228, and glutamate 232. Serine 253 contributes to the substrate binding site.

This sequence belongs to the ketol-acid reductoisomerase family. It depends on Mg(2+) as a cofactor.

It carries out the reaction (2R)-2,3-dihydroxy-3-methylbutanoate + NADP(+) = (2S)-2-acetolactate + NADPH + H(+). The catalysed reaction is (2R,3R)-2,3-dihydroxy-3-methylpentanoate + NADP(+) = (S)-2-ethyl-2-hydroxy-3-oxobutanoate + NADPH + H(+). It functions in the pathway amino-acid biosynthesis; L-isoleucine biosynthesis; L-isoleucine from 2-oxobutanoate: step 2/4. Its pathway is amino-acid biosynthesis; L-valine biosynthesis; L-valine from pyruvate: step 2/4. Functionally, involved in the biosynthesis of branched-chain amino acids (BCAA). Catalyzes an alkyl-migration followed by a ketol-acid reduction of (S)-2-acetolactate (S2AL) to yield (R)-2,3-dihydroxy-isovalerate. In the isomerase reaction, S2AL is rearranged via a Mg-dependent methyl migration to produce 3-hydroxy-3-methyl-2-ketobutyrate (HMKB). In the reductase reaction, this 2-ketoacid undergoes a metal-dependent reduction by NADPH to yield (R)-2,3-dihydroxy-isovalerate. This Salinispora tropica (strain ATCC BAA-916 / DSM 44818 / JCM 13857 / NBRC 105044 / CNB-440) protein is Ketol-acid reductoisomerase (NADP(+)).